Here is a 153-residue protein sequence, read N- to C-terminus: Insulin-like growth factor 1 (153 aa).

The segment at 49-77 (GPETLCGAELVDALQFVCGPRGFYFNKPT) is b. Cystine bridges form between Cys-54/Cys-96, Cys-66/Cys-109, and Cys-95/Cys-100. Residues 78-89 (GYGSSIRRAPQT) form a c region. Residues 90-110 (GIVDECCFRSCDLRRLEMYCA) form an a region. Residues 111 to 118 (PLKPTKAA) are d. A propeptide spans 119 to 153 (RSIRAQRHTDMPKTQKEVHLKNTSRGSAGNKTYRM) (e peptide). The tract at residues 120-153 (SIRAQRHTDMPKTQKEVHLKNTSRGSAGNKTYRM) is disordered. Over residues 125 to 138 (RHTDMPKTQKEVHL) the composition is skewed to basic and acidic residues. Residues 139–153 (KNTSRGSAGNKTYRM) show a composition bias toward polar residues.

Belongs to the insulin family. Forms a ternary complex with IGFR1 and ITGAV:ITGB3. Forms a ternary complex with IGFR1 and ITGA6:ITGB4. Interacts with SH2D3C isoform 2. Forms a ternary complex with IGFBP3 and ALS.

The protein resides in the secreted. The insulin-like growth factors, isolated from plasma, are structurally and functionally related to insulin but have a much higher growth-promoting activity. May be a physiological regulator of [1-14C]-2-deoxy-D-glucose (2DG) transport and glycogen synthesis in osteoblasts. Stimulates glucose transport in bone-derived osteoblastic (PyMS) cells and is effective at much lower concentrations than insulin, not only regarding glycogen and DNA synthesis but also with regard to enhancing glucose uptake. May play a role in synapse maturation. Ca(2+)-dependent exocytosis of IGF1 is required for sensory perception of smell in the olfactory bulb. Acts as a ligand for IGF1R. Binds to the alpha subunit of IGF1R, leading to the activation of the intrinsic tyrosine kinase activity which autophosphorylates tyrosine residues in the beta subunit thus initiating a cascade of down-stream signaling events leading to activation of the PI3K-AKT/PKB and the Ras-MAPK pathways. Binds to integrins ITGAV:ITGB3 and ITGA6:ITGB4. Its binding to integrins and subsequent ternary complex formation with integrins and IGFR1 are essential for IGF1 signaling. Induces the phosphorylation and activation of IGFR1, MAPK3/ERK1, MAPK1/ERK2 and AKT1. As part of the MAPK/ERK signaling pathway, acts as a negative regulator of apoptosis in cardiomyocytes via promotion of STUB1/CHIP-mediated ubiquitination and degradation of ICER-type isoforms of CREM. The polypeptide is Insulin-like growth factor 1 (Mus musculus (Mouse)).